The chain runs to 389 residues: S-adenosylmethionine synthase 3 (389 aa).

Glutamate 9 is a Mg(2+) binding site. Histidine 15 is a binding site for ATP. Glutamate 43 lines the K(+) pocket. Glutamate 56 and glutamine 99 together coordinate L-methionine. ATP is bound by residues 167–169 (DGK), 235–238 (SGRF), aspartate 246, 252–253 (RK), alanine 269, lysine 273, and lysine 277. Aspartate 246 contacts L-methionine. L-methionine is bound at residue lysine 277.

Belongs to the AdoMet synthase family. Homotetramer. Requires Mn(2+) as cofactor. Mg(2+) serves as cofactor. The cofactor is Co(2+). It depends on K(+) as a cofactor.

The protein localises to the cytoplasm. It carries out the reaction L-methionine + ATP + H2O = S-adenosyl-L-methionine + phosphate + diphosphate. It functions in the pathway amino-acid biosynthesis; S-adenosyl-L-methionine biosynthesis; S-adenosyl-L-methionine from L-methionine: step 1/1. In terms of biological role, catalyzes the formation of S-adenosylmethionine from methionine and ATP. The reaction comprises two steps that are both catalyzed by the same enzyme: formation of S-adenosylmethionine (AdoMet) and triphosphate, and subsequent hydrolysis of the triphosphate. This Vitis vinifera (Grape) protein is S-adenosylmethionine synthase 3 (METK3).